A 446-amino-acid polypeptide reads, in one-letter code: Probable polyamine aminopropyl transferase (446 aa).

The segment at 1–117 (MVEPAIGRNH…KRIACVVSAV (117 aa)) is unknown. A disordered region spans residues 64–94 (GRGAERWHRSPRQANGRFSNQRYSSTSPNSS). Residues 75–94 (RQANGRFSNQRYSSTSPNSS) are compositionally biased toward polar residues. The region spanning 116-351 (AVIFVATSCV…ELFAKKPGSG (236 aa)) is the PABS domain. The segment at 118-353 (IFVATSCVSP…FAKKPGSGSE (236 aa)) is spermidine synthase. S-methyl-5'-thioadenosine is bound by residues Asn147, Glu226, and 251–252 (DG). Asp269 acts as the Proton acceptor in catalysis.

This sequence belongs to the spermidine/spermine synthase family. As to quaternary structure, homodimer or homotetramer.

The protein resides in the cytoplasm. The catalysed reaction is S-adenosyl 3-(methylsulfanyl)propylamine + putrescine = S-methyl-5'-thioadenosine + spermidine + H(+). Its pathway is amine and polyamine biosynthesis; spermidine biosynthesis; spermidine from putrescine: step 1/1. Functionally, catalyzes the irreversible transfer of a propylamine group from the amino donor S-adenosylmethioninamine (decarboxy-AdoMet) to putrescine (1,4-diaminobutane) to yield spermidine. The sequence is that of Probable polyamine aminopropyl transferase (speE) from Bifidobacterium longum (strain NCC 2705).